A 350-amino-acid chain; its full sequence is tRNA uridine(34) hydroxylase (350 aa).

The Rhodanese domain maps to 146–240; the sequence is DDPDALFIDM…YARKAREQGL (95 aa). Cysteine 200 acts as the Cysteine persulfide intermediate in catalysis.

The protein belongs to the TrhO family.

The enzyme catalyses uridine(34) in tRNA + AH2 + O2 = 5-hydroxyuridine(34) in tRNA + A + H2O. In terms of biological role, catalyzes oxygen-dependent 5-hydroxyuridine (ho5U) modification at position 34 in tRNAs, the first step in 5-carboxymethoxyuridine (cmo5U) biosynthesis. May be part of an alternate pathway, which is able to bypass cmo5U biogenesis in a subset of tRNAs under aerobic conditions. The chain is tRNA uridine(34) hydroxylase from Escherichia coli O81 (strain ED1a).